The primary structure comprises 143 residues: Hemoglobin subunit alpha (143 aa).

Residue serine 2 is modified to N-acetylserine. One can recognise a Globin domain in the interval serine 2 to arginine 143. Histidine 60 lines the O2 pocket. Position 89 (histidine 89) interacts with heme b.

The protein belongs to the globin family. As to quaternary structure, heterotetramer of two alpha chains and two beta chains. Red blood cells.

In terms of biological role, involved in oxygen transport from the lung to the various peripheral tissues. This Artedidraco orianae (Barbeled plunderfish) protein is Hemoglobin subunit alpha (hba).